The following is a 262-amino-acid chain: Small ribosomal subunit protein eS1 (262 aa).

It belongs to the eukaryotic ribosomal protein eS1 family. Component of the small ribosomal subunit. Mature ribosomes consist of a small (40S) and a large (60S) subunit. The 40S subunit contains about 33 different proteins and 1 molecule of RNA (18S). The 60S subunit contains about 49 different proteins and 3 molecules of RNA (25S, 5.8S and 5S).

The protein resides in the cytoplasm. This Brassica campestris (Field mustard) protein is Small ribosomal subunit protein eS1.